Here is a 75-residue protein sequence, read N- to C-terminus: Translational regulator CsrA (75 aa).

It belongs to the CsrA/RsmA family. Homodimer; the beta-strands of each monomer intercalate to form a hydrophobic core, while the alpha-helices form wings that extend away from the core.

The protein localises to the cytoplasm. A translational regulator that binds mRNA to regulate translation initiation and/or mRNA stability. Usually binds in the 5'-UTR at or near the Shine-Dalgarno sequence preventing ribosome-binding, thus repressing translation. Its main target seems to be the major flagellin gene, while its function is anatagonized by FliW. The sequence is that of Translational regulator CsrA from Exiguobacterium sp. (strain ATCC BAA-1283 / AT1b).